A 199-amino-acid polypeptide reads, in one-letter code: Recombination protein RecR (199 aa).

The segment at 56 to 71 (CAICGNVAEHEQCRIC) adopts a C4-type zinc-finger fold. The region spanning 79-174 (TVLCVVEEPK…RVTRLASGLP (96 aa)) is the Toprim domain.

The protein belongs to the RecR family.

May play a role in DNA repair. It seems to be involved in an RecBC-independent recombinational process of DNA repair. It may act with RecF and RecO. The sequence is that of Recombination protein RecR from Acidothermus cellulolyticus (strain ATCC 43068 / DSM 8971 / 11B).